Here is a 421-residue protein sequence, read N- to C-terminus: MDKLLIEGNGPLSGEIRVSGAKNAALPIMCAALLTPEPFTLHNVPNLQDVRTMLKLLRQMGVEGTQDGHDVTLDAAAIDAPEAPYDLVKTMRASILVLGPLLARFGHARVSLPGGCGIGARPVDQHIKGLQQMGAEIVIEHGYIEAKLADGAKRLHGARIVTDMVTVTGTENLLMAAVLADGETVLENAAREPEVTDLANLLVKMGARIDGIGTDRLVVQGVEALRGAEHTVIADRIEAGTFLCAVAAAGGDVTLRGVPPGILDAVLDKLREAGVTLTMGDDWIRVQMHGRPKAVSFRTSEYPAFPTDMQAQFMMLNCIAEGAALVTETIFENRFMHVQELNRLGANIITEGNTAAVTGVEQLSGATVMATDLRASASLVIAGLVAQGETLVDRIYHLDRGYDCIEDKLSAVGAKIRRIQG.

Position 22–23 (22–23 (KN)) interacts with phosphoenolpyruvate. Arg92 serves as a coordination point for UDP-N-acetyl-alpha-D-glucosamine. Cys116 functions as the Proton donor in the catalytic mechanism. A 2-(S-cysteinyl)pyruvic acid O-phosphothioketal modification is found at Cys116. Residues 121–125 (RPVDQ), Asp308, and Ile330 contribute to the UDP-N-acetyl-alpha-D-glucosamine site.

Belongs to the EPSP synthase family. MurA subfamily.

It is found in the cytoplasm. The catalysed reaction is phosphoenolpyruvate + UDP-N-acetyl-alpha-D-glucosamine = UDP-N-acetyl-3-O-(1-carboxyvinyl)-alpha-D-glucosamine + phosphate. It functions in the pathway cell wall biogenesis; peptidoglycan biosynthesis. In terms of biological role, cell wall formation. Adds enolpyruvyl to UDP-N-acetylglucosamine. This is UDP-N-acetylglucosamine 1-carboxyvinyltransferase from Ralstonia nicotianae (strain ATCC BAA-1114 / GMI1000) (Ralstonia solanacearum).